Consider the following 226-residue polypeptide: Large ribosomal subunit protein uL1 (226 aa).

This sequence belongs to the universal ribosomal protein uL1 family. Part of the 50S ribosomal subunit.

In terms of biological role, binds directly to 23S rRNA. The L1 stalk is quite mobile in the ribosome, and is involved in E site tRNA release. Its function is as follows. Protein L1 is also a translational repressor protein, it controls the translation of the L11 operon by binding to its mRNA. This Mycoplasma pneumoniae (strain ATCC 29342 / M129 / Subtype 1) (Mycoplasmoides pneumoniae) protein is Large ribosomal subunit protein uL1.